The sequence spans 280 residues: Transcription factor MYB60 (280 aa).

HTH myb-type domains follow at residues 9–65 and 66–116; these read KIGI…RPGI and KRGN…KKKL. 2 DNA-binding regions (H-T-H motif) span residues 37–61 and 89–112; these read WRSV…TNYL and WASI…NTHL. An S-nitrosocysteine mark is found at C49 and C53. Residues 118 to 127 show a composition bias toward basic and acidic residues; it reads KSDSDERSRS. 2 disordered regions span residues 118-149 and 204-247; these read KSDS…TYAS and EEGH…NATP. Polar residues predominate over residues 128 to 149; the sequence is ENIALQTSSTRNTINHRSTYAS.

In terms of tissue distribution, specifically expressed in guard cells. Present in seedlings, leaves, stems and flowers.

It localises to the nucleus. Functionally, transcription factor involved in the regulation of gene (e.g. drought-regulated and flavonoid biosynthetic genes) expression and stomatal movements leading to negative regulation of responses to drought and responses to other physiological stimuli (e.g. light). Promotes guard cell deflation in response to water deficit. Triggers root growth upon osmotic stress (e.g. mannitol containing medium). This chain is Transcription factor MYB60, found in Arabidopsis thaliana (Mouse-ear cress).